We begin with the raw amino-acid sequence, 246 residues long: Uroporphyrinogen-III synthase (246 aa).

The protein belongs to the uroporphyrinogen-III synthase family. In terms of assembly, monomer.

It carries out the reaction hydroxymethylbilane = uroporphyrinogen III + H2O. The protein operates within porphyrin-containing compound metabolism; protoporphyrin-IX biosynthesis; coproporphyrinogen-III from 5-aminolevulinate: step 3/4. Functionally, catalyzes cyclization of the linear tetrapyrrole, hydroxymethylbilane, to the macrocyclic uroporphyrinogen III. The protein is Uroporphyrinogen-III synthase (hemD) of Salmonella typhimurium (strain LT2 / SGSC1412 / ATCC 700720).